A 142-amino-acid polypeptide reads, in one-letter code: Large ribosomal subunit protein uL11 (142 aa).

It belongs to the universal ribosomal protein uL11 family. Part of the ribosomal stalk of the 50S ribosomal subunit. Interacts with L10 and the large rRNA to form the base of the stalk. L10 forms an elongated spine to which L12 dimers bind in a sequential fashion forming a multimeric L10(L12)X complex. Post-translationally, one or more lysine residues are methylated.

Its function is as follows. Forms part of the ribosomal stalk which helps the ribosome interact with GTP-bound translation factors. The sequence is that of Large ribosomal subunit protein uL11 from Photobacterium profundum (strain SS9).